A 468-amino-acid chain; its full sequence is 55 kDa erythrocyte membrane protein (468 aa).

The 82-residue stretch at 73–154 (LVQFEKVTEE…MVSIKVIPNQ (82 aa)) folds into the PDZ domain. Positions 160 to 230 (ALQMFMRAQF…PSPELQEWRV (71 aa)) constitute an SH3 domain. In terms of domain architecture, Guanylate kinase-like spans 284 to 453 (RKTLVLIGAS…SLKLLEEAFE (170 aa)).

It belongs to the MAGUK family.

It localises to the membrane. The protein resides in the cell projection. It is found in the stereocilium. In terms of biological role, may play a role in the regulation of neutrophil polarization. The sequence is that of 55 kDa erythrocyte membrane protein (MPP1) from Gallus gallus (Chicken).